The primary structure comprises 214 residues: Heat shock protein 26 (214 aa).

The residue at position 2 (serine 2) is an N-acetylserine. Position 42 is a phosphothreonine (threonine 42). In terms of domain architecture, sHSP spans 86 to 207; it reads GFPRSVAVPV…KNHVKKIEVS (122 aa). Serine 90 bears the Phosphoserine mark. Phosphothreonine is present on threonine 163. Residues 192–214 are disordered; the sequence is KPQKDGKNHVKKIEVSSQESWGN. Over residues 193-205 the composition is skewed to basic and acidic residues; that stretch reads PQKDGKNHVKKIE. 2 positions are modified to phosphoserine: serine 208 and serine 211.

The protein belongs to the small heat shock protein (HSP20) family. In terms of assembly, present in large complexes.

Its function is as follows. Not known. One of the major polypeptides produced on heat shock. This Saccharomyces cerevisiae (strain ATCC 204508 / S288c) (Baker's yeast) protein is Heat shock protein 26 (HSP26).